The primary structure comprises 295 residues: uncharacterized protein (295 aa).

Over residues 57-67 (RKLLVKQKRKS) the composition is skewed to basic residues. The disordered stretch occupies residues 57 to 94 (RKLLVKQKRKSNKEFQSNIIKKRKDEERKGTLKTEQAN). A compositionally biased stretch (basic and acidic residues) spans 79–88 (RKDEERKGTL). Coiled coils occupy residues 87 to 116 (TLKT…YDQY) and 259 to 286 (DVLT…LGER).

It is found in the nucleus. This is an uncharacterized protein from Schizosaccharomyces pombe (strain 972 / ATCC 24843) (Fission yeast).